Here is a 73-residue protein sequence, read N- to C-terminus: UPF0346 protein BLi02292/BL01432 (73 aa).

Belongs to the UPF0346 family.

The sequence is that of UPF0346 protein BLi02292/BL01432 from Bacillus licheniformis (strain ATCC 14580 / DSM 13 / JCM 2505 / CCUG 7422 / NBRC 12200 / NCIMB 9375 / NCTC 10341 / NRRL NRS-1264 / Gibson 46).